Consider the following 270-residue polypeptide: 4-hydroxy-tetrahydrodipicolinate reductase (270 aa).

An NAD(+)-binding site is contributed by 7 to 12; the sequence is GANGRM. Arginine 34 contacts NADP(+). NAD(+)-binding positions include 97–99 and 121–124; these read GTT and SGNM. Residue histidine 155 is the Proton donor/acceptor of the active site. A (S)-2,3,4,5-tetrahydrodipicolinate-binding site is contributed by histidine 156. Lysine 159 functions as the Proton donor in the catalytic mechanism. Position 165–166 (165–166) interacts with (S)-2,3,4,5-tetrahydrodipicolinate; that stretch reads GT.

This sequence belongs to the DapB family.

It localises to the cytoplasm. The enzyme catalyses (S)-2,3,4,5-tetrahydrodipicolinate + NAD(+) + H2O = (2S,4S)-4-hydroxy-2,3,4,5-tetrahydrodipicolinate + NADH + H(+). It catalyses the reaction (S)-2,3,4,5-tetrahydrodipicolinate + NADP(+) + H2O = (2S,4S)-4-hydroxy-2,3,4,5-tetrahydrodipicolinate + NADPH + H(+). Its pathway is amino-acid biosynthesis; L-lysine biosynthesis via DAP pathway; (S)-tetrahydrodipicolinate from L-aspartate: step 4/4. In terms of biological role, catalyzes the conversion of 4-hydroxy-tetrahydrodipicolinate (HTPA) to tetrahydrodipicolinate. The protein is 4-hydroxy-tetrahydrodipicolinate reductase of Bartonella tribocorum (strain CIP 105476 / IBS 506).